The primary structure comprises 178 residues: Cell division protein SepF (178 aa).

Over residues 21 to 46 (YESEQSVATHHDEERPQAQEREERRA) the composition is skewed to basic and acidic residues. The tract at residues 21-65 (YESEQSVATHHDEERPQAQEREERRAPAPVREVVREMPTVDAEEE) is disordered.

The protein belongs to the SepF family. In terms of assembly, homodimer. Interacts with FtsZ.

It is found in the cytoplasm. Its function is as follows. Cell division protein that is part of the divisome complex and is recruited early to the Z-ring. Probably stimulates Z-ring formation, perhaps through the cross-linking of FtsZ protofilaments. Its function overlaps with FtsA. The protein is Cell division protein SepF of Paenarthrobacter aurescens (strain TC1).